The following is a 127-amino-acid chain: Small ribosomal subunit protein bS6 (127 aa).

The disordered stretch occupies residues 99–127; sequence PSPMMKEEKSKSMMPGDAAPAAPAETAAA. Over residues 110–127 the composition is skewed to low complexity; sequence SMMPGDAAPAAPAETAAA.

The protein belongs to the bacterial ribosomal protein bS6 family.

Binds together with bS18 to 16S ribosomal RNA. In Dechloromonas aromatica (strain RCB), this protein is Small ribosomal subunit protein bS6.